The sequence spans 728 residues: Polyribonucleotide nucleotidyltransferase (728 aa).

Mg(2+) is bound by residues D489 and D495. Residues 556–615 (PKIDTIKIDVDKIKIVIGKGGETIDKIIAETGVKIDIDEEGNVSIYSSDQDAINRAKEII) form the KH domain. Positions 625–693 (DEVYHAKVVR…AKGRVDASMK (69 aa)) constitute an S1 motif domain. A disordered region spans residues 691-728 (SMKALLPRPPKPEKSDKHHDKGHPHKKHEEAPLTQTEE). Residues 700-709 (PKPEKSDKHH) show a composition bias toward basic and acidic residues.

Belongs to the polyribonucleotide nucleotidyltransferase family. Requires Mg(2+) as cofactor.

It is found in the cytoplasm. The catalysed reaction is RNA(n+1) + phosphate = RNA(n) + a ribonucleoside 5'-diphosphate. Involved in mRNA degradation. Catalyzes the phosphorolysis of single-stranded polyribonucleotides processively in the 3'- to 5'-direction. In Streptococcus gordonii (strain Challis / ATCC 35105 / BCRC 15272 / CH1 / DL1 / V288), this protein is Polyribonucleotide nucleotidyltransferase.